The chain runs to 253 residues: Testis-expressed protein 47 (253 aa).

In terms of tissue distribution, testis-specific.

This is Testis-expressed protein 47 from Homo sapiens (Human).